The following is a 1043-amino-acid chain: V(D)J recombination-activating protein 1 (1043 aa).

Positions M1 to V288 are interaction with importin alpha-1. Basic and acidic residues predominate over residues K40–E54. The disordered stretch occupies residues K40 to L80. K234 participates in a covalent cross-link: Glycyl lysine isopeptide (Lys-Gly) (interchain with G-Cter in ubiquitin). C269, H273, C293, C296, H298, C308, H310, C313, C316, C328, C331, C358, C363, H375, and H379 together coordinate Zn(2+). An RING-type zinc finger spans residues C293–R332. An RAG1-type zinc finger spans residues L354–K383. The segment at residues G392–Q459 is a DNA-binding region (NBD). Residues D603, D711, and E965 each coordinate a divalent metal cation.

The protein belongs to the RAG1 family. Homodimer. Component of the RAG complex composed of core components RAG1 and RAG2, and associated component HMGB1 or HMGB2. Interacts with DCAF1, leading to recruitment of the CUL4A-RBX1-DDB1-DCAF1/VPRBP complex to ubiquitinate proteins and limit error-prone repair during V(D)J recombination. Mg(2+) serves as cofactor. It depends on Mn(2+) as a cofactor. In terms of processing, autoubiquitinated in the presence of CDC34/UBCH3. Maturing lymphoid cells.

The protein resides in the nucleus. The catalysed reaction is S-ubiquitinyl-[E2 ubiquitin-conjugating enzyme]-L-cysteine + [acceptor protein]-L-lysine = [E2 ubiquitin-conjugating enzyme]-L-cysteine + N(6)-ubiquitinyl-[acceptor protein]-L-lysine.. Functionally, catalytic component of the RAG complex, a multiprotein complex that mediates the DNA cleavage phase during V(D)J recombination. V(D)J recombination assembles a diverse repertoire of immunoglobulin and T-cell receptor genes in developing B and T-lymphocytes through rearrangement of different V (variable), in some cases D (diversity), and J (joining) gene segments. In the RAG complex, RAG1 mediates the DNA-binding to the conserved recombination signal sequences (RSS) and catalyzes the DNA cleavage activities by introducing a double-strand break between the RSS and the adjacent coding segment. RAG2 is not a catalytic component but is required for all known catalytic activities. DNA cleavage occurs in 2 steps: a first nick is introduced in the top strand immediately upstream of the heptamer, generating a 3'-hydroxyl group that can attack the phosphodiester bond on the opposite strand in a direct transesterification reaction, thereby creating 4 DNA ends: 2 hairpin coding ends and 2 blunt, 5'-phosphorylated ends. The chromatin structure plays an essential role in the V(D)J recombination reactions and the presence of histone H3 trimethylated at 'Lys-4' (H3K4me3) stimulates both the nicking and haipinning steps. The RAG complex also plays a role in pre-B cell allelic exclusion, a process leading to expression of a single immunoglobulin heavy chain allele to enforce clonality and monospecific recognition by the B-cell antigen receptor (BCR) expressed on individual B-lymphocytes. The introduction of DNA breaks by the RAG complex on one immunoglobulin allele induces ATM-dependent repositioning of the other allele to pericentromeric heterochromatin, preventing accessibility to the RAG complex and recombination of the second allele. In addition to its endonuclease activity, RAG1 also acts as an E3 ubiquitin-protein ligase that mediates monoubiquitination of histone H3. Histone H3 monoubiquitination is required for the joining step of V(D)J recombination. Mediates polyubiquitination of KPNA1. This is V(D)J recombination-activating protein 1 (RAG1) from Homo sapiens (Human).